The chain runs to 724 residues: Transcription factor dcp-66 (724 aa).

2 stretches are compositionally biased toward polar residues: residues 1 to 12 and 56 to 70; these read MAQVQQVPSSPM and GAST…QLSP. Disordered stretches follow at residues 1 to 23 and 55 to 129; these read MAQV…GNGL and NGAS…KRRL. The segment covering 85–95 has biased composition (basic and acidic residues); sequence AQEKIKLKDDI. The segment covering 105–119 has biased composition (acidic residues); sequence DDDDMEDEELGDEIN. Positions 186–216 form a coiled coil; it reads EEQLRERLNMRREAENQLREEEAKLLVLRKM. Disordered regions lie at residues 328 to 361 and 523 to 590; these read KELS…QITQ and AAPA…QLQQ. Residues 332 to 358 show a composition bias toward low complexity; that stretch reads AAETNASASASPAVQQSQQAQQPQQAQ. 2 stretches are compositionally biased toward polar residues: residues 527–541 and 551–564; these read TSQT…TVSS and IPSS…TQAV. Low complexity predominate over residues 565 to 590; the sequence is KTSTPIHSTPKSSSSSAKKTAAQLQQ.

In terms of tissue distribution, expressed at low levels in excretory cell, pharynx, vulva, and posterior neurons in adults. Strongly expressed in the excretory cell and more weakly in the pharynx in larva. Embryonic expression in the excretory cell.

The protein localises to the nucleus. Transcription factor which binds to the 5'-CCATACATTA-3' motif found in the promoter region of pgp-12 and activates its expression in the excretory cell. The sequence is that of Transcription factor dcp-66 from Caenorhabditis elegans.